Reading from the N-terminus, the 317-residue chain is tRNA pseudouridine synthase B (317 aa).

Residue D47 is the Nucleophile of the active site.

This sequence belongs to the pseudouridine synthase TruB family. Type 1 subfamily.

It carries out the reaction uridine(55) in tRNA = pseudouridine(55) in tRNA. In terms of biological role, responsible for synthesis of pseudouridine from uracil-55 in the psi GC loop of transfer RNAs. The chain is tRNA pseudouridine synthase B from Vibrio atlanticus (strain LGP32) (Vibrio splendidus (strain Mel32)).